The chain runs to 408 residues: Cobalt-precorrin-5B C(1)-methyltransferase (408 aa).

It belongs to the CbiD family.

The catalysed reaction is Co-precorrin-5B + S-adenosyl-L-methionine = Co-precorrin-6A + S-adenosyl-L-homocysteine. It participates in cofactor biosynthesis; adenosylcobalamin biosynthesis; cob(II)yrinate a,c-diamide from sirohydrochlorin (anaerobic route): step 6/10. Its function is as follows. Catalyzes the methylation of C-1 in cobalt-precorrin-5B to form cobalt-precorrin-6A. The sequence is that of Cobalt-precorrin-5B C(1)-methyltransferase from Clostridioides difficile (strain 630) (Peptoclostridium difficile).